Here is a 362-residue protein sequence, read N- to C-terminus: uncharacterized protein (362 aa).

Position 2 is an N-acetylalanine (A2).

The protein belongs to the Gfo/Idh/MocA family. Homodimer.

This is an uncharacterized protein from Arabidopsis thaliana (Mouse-ear cress).